An 85-amino-acid chain; its full sequence is Beta-defensin 18 (85 aa).

The first 23 residues, 1 to 23, serve as a signal peptide directing secretion; sequence MQSAMKLFFIFLIFVFSVSCGPS. Disulfide bonds link Cys-39-Cys-65, Cys-46-Cys-60, and Cys-50-Cys-66.

It belongs to the beta-defensin family.

It is found in the secreted. Has antibacterial activity. This is Beta-defensin 18 (Defb18) from Rattus norvegicus (Rat).